The following is a 383-amino-acid chain: GTP-binding protein 10 (383 aa).

The 136-residue stretch at 13–148 (GNFIDNLRIY…RIIHLDLKLI (136 aa)) folds into the Obg domain. In terms of domain architecture, OBG-type G spans 149 to 344 (SDVGLVGFPN…LIGCIRKTMD (196 aa)). GTP-binding positions include 155 to 162 (GFPNAGKS), 202 to 206 (DLPGL), and 278 to 281 (NKMD). Residues 362–383 (LQKETSRTVKRNLKNSPQRTHH) are disordered. Positions 369–383 (TVKRNLKNSPQRTHH) are enriched in basic residues.

It belongs to the TRAFAC class OBG-HflX-like GTPase superfamily. OBG GTPase family.

It localises to the nucleus. Its subcellular location is the nucleolus. May be involved in the ribosome maturation process. The sequence is that of GTP-binding protein 10 (gtpbp10) from Xenopus tropicalis (Western clawed frog).